The primary structure comprises 273 residues: MENRTNFFHLHLISDSTGETLISAGRAASAQFRSAQPIEHVYPLIRNRKQLLPVLQAIDDAPGIVLYTIVDRELASLIDERCVEMGVASVNVLEPVMNAFQIYLGAPSRRRVGAQHVMNAGYFARIEALNFTMDHDDGQMPDDYNDADVVIIGISRTSKTPTSIYLANRGIKTANIPIVYGVPLPESLFTTTKPLIVCLIATTDRISQVRENRILGATHGFDREHYTDRAAISEELKYARSLCARHNWPLIDVTRRSIEETAAAIVALRPKLR.

153–160 (GISRTSKT) contributes to the ADP binding site.

Belongs to the pyruvate, phosphate/water dikinase regulatory protein family. PDRP subfamily.

The enzyme catalyses N(tele)-phospho-L-histidyl/L-threonyl-[pyruvate, phosphate dikinase] + ADP = N(tele)-phospho-L-histidyl/O-phospho-L-threonyl-[pyruvate, phosphate dikinase] + AMP + H(+). The catalysed reaction is N(tele)-phospho-L-histidyl/O-phospho-L-threonyl-[pyruvate, phosphate dikinase] + phosphate + H(+) = N(tele)-phospho-L-histidyl/L-threonyl-[pyruvate, phosphate dikinase] + diphosphate. In terms of biological role, bifunctional serine/threonine kinase and phosphorylase involved in the regulation of the pyruvate, phosphate dikinase (PPDK) by catalyzing its phosphorylation/dephosphorylation. This Rhizobium leguminosarum bv. trifolii (strain WSM2304) protein is Putative pyruvate, phosphate dikinase regulatory protein.